The following is a 105-amino-acid chain: Large ribosomal subunit protein uL24 (105 aa).

This sequence belongs to the universal ribosomal protein uL24 family. Part of the 50S ribosomal subunit.

One of two assembly initiator proteins, it binds directly to the 5'-end of the 23S rRNA, where it nucleates assembly of the 50S subunit. Functionally, one of the proteins that surrounds the polypeptide exit tunnel on the outside of the subunit. This is Large ribosomal subunit protein uL24 from Saccharophagus degradans (strain 2-40 / ATCC 43961 / DSM 17024).